The following is a 716-amino-acid chain: DNA helicase/primase complex-associated protein (716 aa).

This sequence belongs to the herpesviridae HEPA family. In terms of assembly, associates with the primase and the helicase to form the helicase-primase complex. Interacts with the origin-binding protein. Interacts with the polymerase catalytic subunit.

It is found in the host nucleus. In terms of biological role, component of the helicase/primase complex. Unwinds the DNA at the replication forks and generates single-stranded DNA for both leading and lagging strand synthesis. The primase synthesizes short RNA primers on the lagging strand that the polymerase presumably elongates using dNTPs. The primase-associated factor has no known catalytic activity in the complex and may serve to facilitate the formation of the replisome by directly interacting with the origin-binding protein and the polymerase. In Equus caballus (Horse), this protein is DNA helicase/primase complex-associated protein.